A 188-amino-acid chain; its full sequence is Probable nicotinate-nucleotide adenylyltransferase (188 aa).

The protein belongs to the NadD family.

The catalysed reaction is nicotinate beta-D-ribonucleotide + ATP + H(+) = deamido-NAD(+) + diphosphate. It functions in the pathway cofactor biosynthesis; NAD(+) biosynthesis; deamido-NAD(+) from nicotinate D-ribonucleotide: step 1/1. Its function is as follows. Catalyzes the reversible adenylation of nicotinate mononucleotide (NaMN) to nicotinic acid adenine dinucleotide (NaAD). This chain is Probable nicotinate-nucleotide adenylyltransferase, found in Acholeplasma laidlawii (strain PG-8A).